Here is a 242-residue protein sequence, read N- to C-terminus: Protein unc-119 homolog B-A (242 aa).

Over residues 1–20 (MSGSKREAALTGQPKDERKK) the composition is skewed to basic and acidic residues. A disordered region spans residues 1 to 49 (MSGSKREAALTGQPKDERKKSGGGVINRLKARRVQGKESGTSDQSSVTP). Over residues 38-48 (ESGTSDQSSVT) the composition is skewed to polar residues. Position 133 (Tyr133) interacts with tetradecanoate.

The protein belongs to the PDE6D/unc-119 family.

Functionally, myristoyl-binding protein that acts as a cargo adapter: specifically binds the myristoyl moiety of a subset of N-terminally myristoylated proteins and is required for their localization. Plays a key role in localization of proteins to the primary cilium membrane. The protein is Protein unc-119 homolog B-A (unc119b-a) of Xenopus laevis (African clawed frog).